The sequence spans 430 residues: Phosphomethylpyrimidine synthase (430 aa).

Residues Asn67, Met96, Tyr125, His161, Ser183–Gly185, Asp224–Arg227, and Glu263 contribute to the substrate site. His267 lines the Zn(2+) pocket. Tyr290 lines the substrate pocket. Zn(2+) is bound at residue His331. [4Fe-4S] cluster is bound by residues Cys406, Cys409, and Cys413.

Belongs to the ThiC family. As to quaternary structure, homodimer. [4Fe-4S] cluster serves as cofactor.

It catalyses the reaction 5-amino-1-(5-phospho-beta-D-ribosyl)imidazole + S-adenosyl-L-methionine = 4-amino-2-methyl-5-(phosphooxymethyl)pyrimidine + CO + 5'-deoxyadenosine + formate + L-methionine + 3 H(+). The protein operates within cofactor biosynthesis; thiamine diphosphate biosynthesis. Functionally, catalyzes the synthesis of the hydroxymethylpyrimidine phosphate (HMP-P) moiety of thiamine from aminoimidazole ribotide (AIR) in a radical S-adenosyl-L-methionine (SAM)-dependent reaction. The sequence is that of Phosphomethylpyrimidine synthase from Campylobacter jejuni subsp. doylei (strain ATCC BAA-1458 / RM4099 / 269.97).